Reading from the N-terminus, the 276-residue chain is NH(3)-dependent NAD(+) synthetase (276 aa).

An ATP-binding site is contributed by 43–50 (GISGGVDS). A Mg(2+)-binding site is contributed by Asp-49. Residue Arg-146 participates in deamido-NAD(+) binding. Thr-166 is an ATP binding site. Glu-171 serves as a coordination point for Mg(2+). Residues Lys-179 and Asp-186 each coordinate deamido-NAD(+). Residues Lys-195 and Thr-217 each contribute to the ATP site. 266–267 (HK) contacts deamido-NAD(+).

The protein belongs to the NAD synthetase family. As to quaternary structure, homodimer.

It catalyses the reaction deamido-NAD(+) + NH4(+) + ATP = AMP + diphosphate + NAD(+) + H(+). It functions in the pathway cofactor biosynthesis; NAD(+) biosynthesis; NAD(+) from deamido-NAD(+) (ammonia route): step 1/1. Functionally, catalyzes the ATP-dependent amidation of deamido-NAD to form NAD. Uses ammonia as a nitrogen source. The polypeptide is NH(3)-dependent NAD(+) synthetase (Vibrio vulnificus (strain CMCP6)).